The sequence spans 501 residues: Mitochondrial inner membrane i-AAA protease supercomplex subunit MGR3 (501 aa).

At 1-77 (MLLQGMRLSQ…PKPNLKKKNR (77 aa)) the chain is on the mitochondrial matrix side. The segment at 39–72 (RPPASNFNTQESAPIPESPANSPTRPQMAPKPNL) is disordered. Residues 78 to 95 (SLMYSIIGVSIVGLYFWF) traverse the membrane as a helical segment. At 96–501 (KSNSRKQKLP…LKAAKKEGLN (406 aa)) the chain is on the mitochondrial intermembrane side. 4 TPR repeats span residues 109-144 (QKVWKEAIWQESDKMDFNYKEALRRYIEALDECDRS), 154-187 (TRIELKIAEMYEKLNMLEEAQNLYQELLSRFFEA), 386-420 (GTYIKAVRFVRKNRDLCLERAQKCYDSVIAFAKRN), and 440-473 (ALSTYGMGVLSLHEGVLAKAEKLFKDSITMAKET).

It belongs to the MGR3 family. Component of the mitochondrial inner membrane i-AAA protease supercomplex composed of MGR1, MGR3 and YME1. With MGR1, forms a subcomplex that binds to YME1 and to substrates to facilitate proteolysis.

The protein resides in the mitochondrion inner membrane. Its function is as follows. Component of the mitochondrial inner membrane i-AAA protease supercomplex, which degrades misfolded mitochondrial proteins. Together with MGR1, functions in an adapter complex that targets substrates to the i-AAA protease for degradation. Required for growth of cells lacking the mitochondrial genome. This chain is Mitochondrial inner membrane i-AAA protease supercomplex subunit MGR3 (MGR3), found in Saccharomyces cerevisiae (strain ATCC 204508 / S288c) (Baker's yeast).